Reading from the N-terminus, the 322-residue chain is Cytochrome c biogenesis protein CcsA (322 aa).

A run of 7 helical transmembrane segments spans residues 2–22 (LFAT…SIVI), 44–64 (GMIA…LSSG), 68–88 (LSNL…LHTI), 143–163 (MLLS…ILII), 226–246 (VISL…VWAN), 260–274 (TWAF…IYLH), and 289–309 (VASI…LLGI).

Belongs to the CcmF/CycK/Ccl1/NrfE/CcsA family. In terms of assembly, may interact with Ccs1.

It is found in the plastid. Its subcellular location is the chloroplast thylakoid membrane. Required during biogenesis of c-type cytochromes (cytochrome c6 and cytochrome f) at the step of heme attachment. The polypeptide is Cytochrome c biogenesis protein CcsA (Brachypodium distachyon (Purple false brome)).